The following is a 146-amino-acid chain: Histone H2B (146 aa).

Positions 1–16 (MAPRADKKPAEKKPGA) are enriched in basic and acidic residues. The tract at residues 1–52 (MAPRADKKPAEKKPGAEKTPVAEKAPAEKKPRAGKKLPRDAGAAGDKKKKRA) is disordered. An N6-acetyllysine mark is found at Lys-7, Lys-35, and Lys-36. Lys-142 is covalently cross-linked (Glycyl lysine isopeptide (Lys-Gly) (interchain with G-Cter in ubiquitin)).

The protein belongs to the histone H2B family. The nucleosome is a histone octamer containing two molecules each of H2A, H2B, H3 and H4 assembled in one H3-H4 heterotetramer and two H2A-H2B heterodimers. The octamer wraps approximately 147 bp of DNA. Post-translationally, can be acetylated to form H2BK6ac, H2BK33ac and H2BK34ac. In terms of processing, monoubiquitinated to form H2BK143ub1; may give a specific tag for epigenetic transcriptional activation.

Its subcellular location is the nucleus. It is found in the chromosome. Its function is as follows. Core component of nucleosome. Nucleosomes wrap and compact DNA into chromatin, limiting DNA accessibility to the cellular machineries which require DNA as a template. Histones thereby play a central role in transcription regulation, DNA repair, DNA replication and chromosomal stability. DNA accessibility is regulated via a complex set of post-translational modifications of histones, also called histone code, and nucleosome remodeling. In Nicotiana tabacum (Common tobacco), this protein is Histone H2B (HIS2B).